The chain runs to 269 residues: Phosphatidylglycerol--prolipoprotein diacylglyceryl transferase (269 aa).

The next 3 helical transmembrane spans lie at 21–41 (WYGIIIASAVILAVYLSVLEG), 54–74 (LLLYSLPVAIICARIYYVVFE), and 88–108 (IWDGGIAIYGALIGAVIVILI). Arginine 136 is an a 1,2-diacyl-sn-glycero-3-phospho-(1'-sn-glycerol) binding site. 2 helical membrane passes run 206-226 (GEVVLSYIIWYSFGRFFIEGM) and 236-256 (LRVSQWLSLILFISAIAAIFY).

It belongs to the Lgt family.

The protein localises to the cell membrane. It catalyses the reaction L-cysteinyl-[prolipoprotein] + a 1,2-diacyl-sn-glycero-3-phospho-(1'-sn-glycerol) = an S-1,2-diacyl-sn-glyceryl-L-cysteinyl-[prolipoprotein] + sn-glycerol 1-phosphate + H(+). It functions in the pathway protein modification; lipoprotein biosynthesis (diacylglyceryl transfer). Its function is as follows. Catalyzes the transfer of the diacylglyceryl group from phosphatidylglycerol to the sulfhydryl group of the N-terminal cysteine of a prolipoprotein, the first step in the formation of mature lipoproteins. This chain is Phosphatidylglycerol--prolipoprotein diacylglyceryl transferase, found in Ligilactobacillus salivarius (strain UCC118) (Lactobacillus salivarius).